The chain runs to 375 residues: Succinyl-diaminopimelate desuccinylase (375 aa).

Residue His-66 participates in Zn(2+) binding. Residue Asp-68 is part of the active site. Asp-99 is a Zn(2+) binding site. Glu-133 (proton acceptor) is an active-site residue. Residues Glu-134, Glu-162, and His-348 each contribute to the Zn(2+) site.

The protein belongs to the peptidase M20A family. DapE subfamily. As to quaternary structure, homodimer. Requires Zn(2+) as cofactor. The cofactor is Co(2+).

It carries out the reaction N-succinyl-(2S,6S)-2,6-diaminopimelate + H2O = (2S,6S)-2,6-diaminopimelate + succinate. Its pathway is amino-acid biosynthesis; L-lysine biosynthesis via DAP pathway; LL-2,6-diaminopimelate from (S)-tetrahydrodipicolinate (succinylase route): step 3/3. Its function is as follows. Catalyzes the hydrolysis of N-succinyl-L,L-diaminopimelic acid (SDAP), forming succinate and LL-2,6-diaminopimelate (DAP), an intermediate involved in the bacterial biosynthesis of lysine and meso-diaminopimelic acid, an essential component of bacterial cell walls. The chain is Succinyl-diaminopimelate desuccinylase from Buchnera aphidicola subsp. Acyrthosiphon pisum (strain APS) (Acyrthosiphon pisum symbiotic bacterium).